Reading from the N-terminus, the 400-residue chain is Exodeoxyribonuclease 7 large subunit (400 aa).

It belongs to the XseA family. In terms of assembly, heterooligomer composed of large and small subunits.

It is found in the cytoplasm. The enzyme catalyses Exonucleolytic cleavage in either 5'- to 3'- or 3'- to 5'-direction to yield nucleoside 5'-phosphates.. Bidirectionally degrades single-stranded DNA into large acid-insoluble oligonucleotides, which are then degraded further into small acid-soluble oligonucleotides. The sequence is that of Exodeoxyribonuclease 7 large subunit from Clostridium perfringens (strain SM101 / Type A).